A 93-amino-acid chain; its full sequence is Alpha-defensin 2 (93 aa).

An N-terminal signal peptide occupies residues 1-19 (MKPLVLLSALVLLSFQVQA). Residues 20 to 58 (DPIQNTDEETKTEEQSGEEDQAVSVSFGDREGASLQEES) constitute a propeptide that is removed on maturation. Positions 23-49 (QNTDEETKTEEQSGEEDQAVSVSFGDR) are disordered. 3 disulfides stabilise this stretch: cysteine 64–cysteine 92, cysteine 66–cysteine 81, and cysteine 71–cysteine 91.

It belongs to the alpha-defensin family. In terms of tissue distribution, paneth cells of the small bowel.

It is found in the secreted. Functionally, has broad-spectrum antimicrobial properties. Has antibacterial activity against the Gram-positive bacterium L.monocytogenes EGD and the Gram-negative bacteria E.coli ML-35p and avirulent S.typhimurium 7953, but not against the mouse-virulent S.typhimurium 14028S. Probably contributes to the antimicrobial barrier function of the small bowel mucosa. The sequence is that of Alpha-defensin 2 (Defa2) from Mus musculus (Mouse).